The sequence spans 464 residues: Argininosuccinate lyase (464 aa).

At Ala-2 the chain carries N-acetylalanine. Lys-7 is modified (N6-acetyllysine). Ser-27 is a binding site for 2-(N(omega)-L-arginino)succinate. N6-acetyllysine is present on Lys-69. Asn-114 and Thr-159 together coordinate 2-(N(omega)-L-arginino)succinate. His-160 functions as the Proton acceptor in the catalytic mechanism. The Proton donor role is filled by Ser-281. Lys-288 is modified (N6-acetyllysine). 2-(N(omega)-L-arginino)succinate-binding residues include Asn-289, Tyr-321, Gln-326, and Lys-329.

The protein belongs to the lyase 1 family. Argininosuccinate lyase subfamily. In terms of assembly, homotetramer. Forms tissue-specific complexes with ASS1, SLC7A1, HSP90AA1 and nitric oxide synthase NOS1, NOS2 or NOS3; the complex maintenance is independent of ASL catalytic function. In terms of processing, acetylation modifies enzyme activity in response to alterations of extracellular nutrient availability. Acetylation increased with trichostin A (TSA) or with nicotinamide (NAM). Glucose increases acetylation by about a factor of 3 with decreasing enzyme activity. Acetylation on Lys-288 is decreased on the addition of extra amino acids resulting in activation of enzyme activity.

The enzyme catalyses 2-(N(omega)-L-arginino)succinate = fumarate + L-arginine. Its pathway is amino-acid biosynthesis; L-arginine biosynthesis; L-arginine from L-ornithine and carbamoyl phosphate: step 3/3. It participates in nitrogen metabolism; urea cycle; L-arginine and fumarate from (N(omega)-L-arginino)succinate: step 1/1. Its activity is regulated as follows. Enzyme activity is regulated by acetylation. In terms of biological role, catalyzes the reversible cleavage of L-argininosuccinate to fumarate and L-arginine, an intermediate step reaction in the urea cycle mostly providing for hepatic nitrogen detoxification into excretable urea as well as de novo L-arginine synthesis in nonhepatic tissues. Essential regulator of intracellular and extracellular L-arginine pools. As part of citrulline-nitric oxide cycle, forms tissue-specific multiprotein complexes with argininosuccinate synthase ASS1, transport protein SLC7A1 and nitric oxide synthase NOS1, NOS2 or NOS3, allowing for cell-autonomous L-arginine synthesis while channeling extracellular L-arginine to nitric oxide synthesis pathway. This is Argininosuccinate lyase (ASL) from Macaca fascicularis (Crab-eating macaque).